Consider the following 1139-residue polypeptide: Protein kinase C-like (1139 aa).

Positions 1–67 (MNEDEAIQNI…LRDIQLRKVG (67 aa)) constitute an REM-1 1 domain. The segment at 72-132 (GMSLGADDAG…PGPGAASKAR (61 aa)) is disordered. Residues 142–219 (KYDTPYLGPR…LKRYEELHVD (78 aa)) enclose the REM-1 2 domain. The C2 domain maps to 225 to 343 (AQDDDSINTP…MRRKRIEAEM (119 aa)). Positions 349–404 (VSADRMGSTGAPSQFPMSPTSGSFGGSPQAPGGGQGQAPGPFGDPAPQPQVVTGPI) are disordered. The span at 358–368 (GAPSQFPMSPT) shows a compositional bias: polar residues. 2 Phorbol-ester/DAG-type zinc fingers span residues 454–502 (GHKF…VTKC) and 522–572 (PHRF…PDFC). Disordered stretches follow at residues 590-637 (KQRQ…TPSA), 649-668 (QTSPQRPGQPGRAPSDLSAA), and 679-804 (QGRT…TDPG). Positions 594–614 (QKTTSLSEKTLRSGATKSPTT) are enriched in polar residues. The segment covering 615–629 (AGHGSSASFSSAGAG) has biased composition (low complexity). 2 stretches are compositionally biased toward pro residues: residues 723-734 (AQPPAQQRPPQP) and 743-760 (AQMPPQQPPPQQPLPPQP). Residues 761-793 (GQQYQQQQPAAQKPQPQPPATAQGAAAGPPGSQ) are compositionally biased toward low complexity. Positions 814-1073 (FNFLAVLGKG…AQEVMSQPFF (260 aa)) constitute a Protein kinase domain. ATP-binding positions include 820–828 (LGKGNFGKV) and lysine 843. Aspartate 939 serves as the catalytic Proton acceptor. Residues 1074 to 1139 (RNINWDDIYH…RGFSYTADLD (66 aa)) form the AGC-kinase C-terminal domain.

It belongs to the protein kinase superfamily. AGC Ser/Thr protein kinase family. PKC subfamily.

It carries out the reaction L-seryl-[protein] + ATP = O-phospho-L-seryl-[protein] + ADP + H(+). It catalyses the reaction L-threonyl-[protein] + ATP = O-phospho-L-threonyl-[protein] + ADP + H(+). Stimulated about twofold by phospholipids or phorbol esters. This Hypocrea jecorina (Trichoderma reesei) protein is Protein kinase C-like (pkc1).